The chain runs to 91 residues: UPF0223 protein SACOL1106 (91 aa).

The protein belongs to the UPF0223 family.

The sequence is that of UPF0223 protein SACOL1106 from Staphylococcus aureus (strain COL).